The chain runs to 237 residues: Phosphoglycolate phosphatase (237 aa).

The Nucleophile role is filled by Asp-15. Mg(2+) is bound by residues Asp-15, Asp-17, and Asp-177.

This sequence belongs to the HAD-like hydrolase superfamily. CbbY/CbbZ/Gph/YieH family. Mg(2+) serves as cofactor.

The catalysed reaction is 2-phosphoglycolate + H2O = glycolate + phosphate. It participates in organic acid metabolism; glycolate biosynthesis; glycolate from 2-phosphoglycolate: step 1/1. Its function is as follows. Specifically catalyzes the dephosphorylation of 2-phosphoglycolate. Is involved in the dissimilation of the intracellular 2-phosphoglycolate formed during the DNA repair of 3'-phosphoglycolate ends, a major class of DNA lesions induced by oxidative stress. This Caulobacter vibrioides (strain ATCC 19089 / CIP 103742 / CB 15) (Caulobacter crescentus) protein is Phosphoglycolate phosphatase.